A 199-amino-acid chain; its full sequence is dITP/XTP pyrophosphatase (199 aa).

Substrate is bound at residue 7–12; the sequence is TGNAGK. Residue D68 is the Proton acceptor of the active site. Residue D68 coordinates Mg(2+). Substrate is bound by residues S69, 153–156, K176, and 181–182; these read FGYD and HR.

It belongs to the HAM1 NTPase family. Homodimer. Mg(2+) is required as a cofactor.

It catalyses the reaction XTP + H2O = XMP + diphosphate + H(+). The enzyme catalyses dITP + H2O = dIMP + diphosphate + H(+). The catalysed reaction is ITP + H2O = IMP + diphosphate + H(+). Pyrophosphatase that catalyzes the hydrolysis of nucleoside triphosphates to their monophosphate derivatives, with a high preference for the non-canonical purine nucleotides XTP (xanthosine triphosphate), dITP (deoxyinosine triphosphate) and ITP. Seems to function as a house-cleaning enzyme that removes non-canonical purine nucleotides from the nucleotide pool, thus preventing their incorporation into DNA/RNA and avoiding chromosomal lesions. This Halorhodospira halophila (strain DSM 244 / SL1) (Ectothiorhodospira halophila (strain DSM 244 / SL1)) protein is dITP/XTP pyrophosphatase.